We begin with the raw amino-acid sequence, 462 residues long: Argininosuccinate lyase (462 aa).

It belongs to the lyase 1 family. Argininosuccinate lyase subfamily.

Its subcellular location is the cytoplasm. It carries out the reaction 2-(N(omega)-L-arginino)succinate = fumarate + L-arginine. It functions in the pathway amino-acid biosynthesis; L-arginine biosynthesis; L-arginine from L-ornithine and carbamoyl phosphate: step 3/3. This Chloroflexus aggregans (strain MD-66 / DSM 9485) protein is Argininosuccinate lyase.